A 743-amino-acid chain; its full sequence is NAD(P)H-quinone oxidoreductase subunit 5, chloroplastic (743 aa).

A run of 16 helical transmembrane segments spans residues W9–F29, W40–I60, I89–I109, F125–I145, I147–T167, G185–F205, V224–F244, T258–A278, F284–F304, L327–I347, A354–C374, N396–S416, W425–Y445, L551–F571, V607–V627, and Y723–L743.

The protein belongs to the complex I subunit 5 family. As to quaternary structure, NDH is composed of at least 16 different subunits, 5 of which are encoded in the nucleus.

It localises to the plastid. The protein resides in the chloroplast thylakoid membrane. The catalysed reaction is a plastoquinone + NADH + (n+1) H(+)(in) = a plastoquinol + NAD(+) + n H(+)(out). It catalyses the reaction a plastoquinone + NADPH + (n+1) H(+)(in) = a plastoquinol + NADP(+) + n H(+)(out). In terms of biological role, NDH shuttles electrons from NAD(P)H:plastoquinone, via FMN and iron-sulfur (Fe-S) centers, to quinones in the photosynthetic chain and possibly in a chloroplast respiratory chain. The immediate electron acceptor for the enzyme in this species is believed to be plastoquinone. Couples the redox reaction to proton translocation, and thus conserves the redox energy in a proton gradient. The chain is NAD(P)H-quinone oxidoreductase subunit 5, chloroplastic (ndhF) from Helianthus annuus (Common sunflower).